The sequence spans 338 residues: Cytochrome bd ubiquinol oxidase subunit 2 (338 aa).

9 consecutive transmembrane segments (helical) span residues Leu-7–Phe-27, Ile-50–Ala-70, Trp-75–Met-95, Val-119–Phe-139, Ile-163–Leu-183, Met-196–Ala-216, Glu-227–Ile-247, Phe-256–Pro-276, and Ile-306–Phe-326.

This sequence belongs to the cytochrome ubiquinol oxidase subunit 2 family. In terms of assembly, heterodimer of subunits I and II. The cofactor is heme b. Heme d cis-diol is required as a cofactor.

It is found in the cell membrane. It carries out the reaction 2 a ubiquinol + O2(in) + 4 H(+)(in) = 2 a ubiquinone + 2 H2O(in) + 4 H(+)(out). In Bacillus subtilis (strain 168), this protein is Cytochrome bd ubiquinol oxidase subunit 2 (cydB).